The chain runs to 348 residues: Lipopolysaccharide heptosyltransferase 2 (348 aa).

It belongs to the glycosyltransferase 9 family.

The enzyme catalyses an L-alpha-D-Hep-(1-&gt;5)-[alpha-Kdo-(2-&gt;4)]-alpha-Kdo-(2-&gt;6)-lipid A + ADP-L-glycero-beta-D-manno-heptose = an L-alpha-D-Hep-(1-&gt;3)-L-alpha-D-Hep-(1-&gt;5)-[alpha-Kdo-(2-&gt;4)]-alpha-Kdo-(2-&gt;6)-lipid A + ADP + H(+). It carries out the reaction L-alpha-D-Hep-(1-&gt;5)-[alpha-Kdo-(2-&gt;4)]-alpha-Kdo-(2-&gt;6)-lipid A (E. coli) + ADP-L-glycero-beta-D-manno-heptose = L-alpha-D-Hep-(1-&gt;3)-L-alpha-D-Hep-(1-&gt;5)-[alpha-Kdo-(2-&gt;4)]-alpha-Kdo-(2-&gt;6)-lipid A (E. coli) + ADP + H(+). The protein operates within bacterial outer membrane biogenesis; LPS core biosynthesis. In terms of biological role, glycosyltransferase involved in the biosynthesis of the core oligosaccharide region of lipopolysaccharide (LPS). Catalyzes the addition of the second heptose unit to the heptosyl-Kdo2-lipid A module. The analog ADP-mannose can serve as an alternative donor in place of ADP-L-glycero-D-manno-heptose, but with lower efficiency. In Escherichia coli (strain K12), this protein is Lipopolysaccharide heptosyltransferase 2.